Here is a 371-residue protein sequence, read N- to C-terminus: MKFVDEAYIDISAGDGGNGCVSFRHEKYKEFGGPDGGDGGRGGHVYAVADVNLNTLVDYRFSRRHDATRGEHGKGSDMFGAAGNDITLRMPVGTIISDAETGEVLYELLTAGEVVTIAKGGDGGYGNLRFKSAINRAPRQKTPGWPGERKNLKLELKVLADVGLLGMPNAGKSTFIAAVSNARPKIADYPFTTLHPNLGVVRVAAEQSFVVADIPGLIEGASEGAGLGHQFLRHLQRTRLLLHVVDLAPFDDSVDPVAQAKAIVGELQKYDAELYNKPRWLVLNKLDMVPAEERAARVKDFVKRFKWKGPVFEISALTREGCEVLIRTIYKHVHEQQQIEAGPKEIDPRFVEVEGDGVDLTDPRFAPRDSE.

Residues 1-159 form the Obg domain; the sequence is MKFVDEAYID…KNLKLELKVL (159 aa). An OBG-type G domain is found at 160–334; it reads ADVGLLGMPN…LIRTIYKHVH (175 aa). Residues 166 to 173, 191 to 195, 213 to 216, 284 to 287, and 315 to 317 each bind GTP; these read GMPNAGKS, FTTLH, DIPG, NKLD, and SAL. Mg(2+)-binding residues include serine 173 and threonine 193.

This sequence belongs to the TRAFAC class OBG-HflX-like GTPase superfamily. OBG GTPase family. In terms of assembly, monomer. The cofactor is Mg(2+).

The protein localises to the cytoplasm. Functionally, an essential GTPase which binds GTP, GDP and possibly (p)ppGpp with moderate affinity, with high nucleotide exchange rates and a fairly low GTP hydrolysis rate. Plays a role in control of the cell cycle, stress response, ribosome biogenesis and in those bacteria that undergo differentiation, in morphogenesis control. The sequence is that of GTPase Obg from Delftia acidovorans (strain DSM 14801 / SPH-1).